Here is a 2004-residue protein sequence, read N- to C-terminus: Immunoglobulin A1 protease (2004 aa).

A signal peptide spans 1 to 42; sequence MEKYFGEKQERFSFRKLSVGLVSATISSLFFMSVLASSSVDA. Positions 43–99 are excised as a propeptide; it reads QETAGVHYKYVADSELSSEEKKQLVYDIPTYVENDDETYYLVYKLNSQNQLAELPNT. Positions 96-100 match the LPXTG sorting signal motif; sequence LPNTG. Pentaglycyl murein peptidoglycan amidated threonine is present on Thr-99. Transmembrane regions (helical) follow at residues 106–125 and 132–154; these read QALVAGASLAAMGILIFAVS and KTVLHLVLVAGIGNGVLVSVHAL. Residues 155–2004 lie on the Extracellular side of the membrane; it reads ENHLLLNYNT…FRSSIFENKK (1850 aa). Disordered stretches follow at residues 194 to 213, 235 to 305, 373 to 394, and 422 to 720; these read TTSESEVSNQKSSVATPTKQ, QEQT…NPQD, EIVSTSTTAPSPRIVEKGTKKT, and PELP…PEKT. Composition is skewed to polar residues over residues 197–213 and 235–246; these read ESEVSNQKSSVATPTKQ and QEQTPVSSTKPT. Over residues 276-296 the composition is skewed to basic and acidic residues; that stretch reads LAEHKNLETKKEEKISPKEKT. The G5 domain maps to 314–393; that stretch reads KPELLYREET…PRIVEKGTKK (80 aa). A run of 3 repeats spans residues 419-435, 436-452, and 453-469. The segment at 419–469 is 3 X 17 AA approximate tandem repeats; it reads AIQPELPEAVVSDKGEPEVQPTLPEAVVTDKGETEVQPESPDTVVSDKGEP. Positions 485-511 are enriched in basic and acidic residues; the sequence is VKPETPVEKTKEQGPEKTEEVPVKPTE. Composition is skewed to polar residues over residues 516–529 and 538–572; these read NPNEGTTEGTSIQE and EESTTNSEKVSPDTSSKNTGEVSSNPSDSTTSVGE. Residues 574 to 591 show a composition bias toward basic and acidic residues; it reads NKPEHNDSKNENSEKTVE. Composition is skewed to polar residues over residues 618–639 and 648–681; these read EETQTNSGKIANENTGEVSNKP and ESNQPEKNGTATKPENSGNTTSENGQTEPEPSNG. Low complexity predominate over residues 682-699; that stretch reads NSTEDVSTESNTSNSNGN. Basic and acidic residues predominate over residues 700-720; it reads EEIKQENELDPDKKVEEPEKT. Residue His-1645 participates in Zn(2+) binding. Glu-1646 is an active-site residue. Zn(2+)-binding residues include His-1649 and Glu-1669.

The protein belongs to the peptidase M26 family. Zn(2+) is required as a cofactor. Post-translationally, the Gram-positive cell-wall anchor motif LPXTG is located in the N-terminal part, in contrast to such motifs in other known streptococcal and staphylococcal proteins. The protease could be cleaved by the sortase and anchored in the membrane via the two potential N-terminal transmembrane domains, whereas the propeptide located prior to the LPXTG motif would remain attached to the cell wall peptidoglycan by an amide bond.

The protein localises to the secreted. The protein resides in the cell wall. Its subcellular location is the membrane. It carries out the reaction Cleavage of Pro-|-Thr bond in the hinge region of the heavy chain of human IgA.. Functionally, zinc metalloproteinase which cleaves human immunoglobulin A1 (IgA1) in the hinge region, rendering it less efficient in coating the surface of colonizing or invading pneumococci. Strongly contributes to virulence in mice. May be responsible for pneumococcal infection and is potentially involved in distinct stages of pneumococcal disease. This is Immunoglobulin A1 protease (iga) from Streptococcus pneumoniae serotype 4 (strain ATCC BAA-334 / TIGR4).